The chain runs to 64 residues: UPF0337 protein SH2043 (64 aa).

A disordered region spans residues 1 to 64 (MAEDKFEQAK…DKVKGNNDNK (64 aa)). Residues 22–64 (DNKDLEKEGQNDKASGKAKEAVENVKNKANDLIDKVKGNNDNK) are compositionally biased toward basic and acidic residues.

Belongs to the UPF0337 (CsbD) family.

The sequence is that of UPF0337 protein SH2043 from Staphylococcus haemolyticus (strain JCSC1435).